A 499-amino-acid chain; its full sequence is ATP synthase subunit alpha, chloroplastic (499 aa).

170 to 177 (GDRQTGKT) lines the ATP pocket.

It belongs to the ATPase alpha/beta chains family. In terms of assembly, F-type ATPases have 2 components, CF(1) - the catalytic core - and CF(0) - the membrane proton channel. CF(1) has five subunits: alpha(3), beta(3), gamma(1), delta(1), epsilon(1). CF(0) has four main subunits: a, b, b' and c.

It localises to the plastid. It is found in the chloroplast thylakoid membrane. The enzyme catalyses ATP + H2O + 4 H(+)(in) = ADP + phosphate + 5 H(+)(out). Functionally, produces ATP from ADP in the presence of a proton gradient across the membrane. The alpha chain is a regulatory subunit. The chain is ATP synthase subunit alpha, chloroplastic from Emiliania huxleyi (Coccolithophore).